A 364-amino-acid polypeptide reads, in one-letter code: tRNA 2-selenouridine synthase (364 aa).

The region spanning 14–137 is the Rhodanese domain; the sequence is LIADTPIIDV…LRQTAIQATI (124 aa). The S-selanylcysteine intermediate role is filled by C97.

It belongs to the SelU family. As to quaternary structure, monomer.

It catalyses the reaction 5-methylaminomethyl-2-thiouridine(34) in tRNA + selenophosphate + (2E)-geranyl diphosphate + H2O + H(+) = 5-methylaminomethyl-2-selenouridine(34) in tRNA + (2E)-thiogeraniol + phosphate + diphosphate. It carries out the reaction 5-methylaminomethyl-2-thiouridine(34) in tRNA + (2E)-geranyl diphosphate = 5-methylaminomethyl-S-(2E)-geranyl-thiouridine(34) in tRNA + diphosphate. The catalysed reaction is 5-methylaminomethyl-S-(2E)-geranyl-thiouridine(34) in tRNA + selenophosphate + H(+) = 5-methylaminomethyl-2-(Se-phospho)selenouridine(34) in tRNA + (2E)-thiogeraniol. The enzyme catalyses 5-methylaminomethyl-2-(Se-phospho)selenouridine(34) in tRNA + H2O = 5-methylaminomethyl-2-selenouridine(34) in tRNA + phosphate. Functionally, involved in the post-transcriptional modification of the uridine at the wobble position (U34) of tRNA(Lys), tRNA(Glu) and tRNA(Gln). Catalyzes the conversion of 2-thiouridine (S2U-RNA) to 2-selenouridine (Se2U-RNA). Acts in a two-step process involving geranylation of 2-thiouridine (S2U) to S-geranyl-2-thiouridine (geS2U) and subsequent selenation of the latter derivative to 2-selenouridine (Se2U) in the tRNA chain. This is tRNA 2-selenouridine synthase from Escherichia coli O6:K15:H31 (strain 536 / UPEC).